The chain runs to 604 residues: MLARALLLCAVLALSHTANPCCSHPCQNRGVCMSVGFDQYKCDCTRTGFYGENCSTPEFLTRIKLFLKPTPNTVHYILTHFKGFWNVVNNIPFLRNAIMSYVLTSRSHLIDSPPTYNADYGYKSWEAFSNLSYYTRALPPVPDDCPTPLGVKGKKQLPDSNEIVEKLLLRRKFIPDPQGSNMMFAFFAQHFTHQFFKTDHKRGPAFTNGLGHGVDLNHIYGETLARQRKLRLFKDGKMKYQIIDGEMYPPTVKDTQAEMIYPPQVPEHLRFAVGQEVFGLVPGLMMYATIWLREHNRVCDVLKQEHPEWGDEQLFQTSRLILIGETIKIVIEDYVQHLSGYHFKLKFDPELLFNKQFQYQNRIAAEFNTLYHWHPLLPDTFQIHDQKYNYQQFIYNNSILLEHGITQFVESFTRQIAGRVAGGRNVPPAVQKVSQASIDQSRQMKYQSFNEYRKRFMLKPYESFEELTGEKEMSAELEALYGDIDAVELYPALLVEKPRPDAIFGETMVEVGAPFSLKGLMGNVICSPAYWKPSTFGGEVGFQIINTASIQSLICNNVKGCPFTSFSVPDPELIKTVTINASSSRSGLDDINPTVLLKERSTEL.

Positions methionine 1 to threonine 17 are cleaved as a signal peptide. Positions alanine 18–serine 55 constitute an EGF-like domain. Intrachain disulfides connect cysteine 21–cysteine 32, cysteine 22–cysteine 145, cysteine 26–cysteine 42, and cysteine 44–cysteine 54. N-linked (GlcNAc...) asparagine glycosylation occurs at asparagine 53. Residue arginine 106 participates in substrate binding. A glycan (N-linked (GlcNAc...) asparagine) is linked at asparagine 130. Histidine 193 (proton acceptor) is an active-site residue. Residue tyrosine 341 participates in substrate binding. Tyrosine 371 serves as the catalytic For cyclooxygenase activity. Histidine 374 contacts heme b. An N-linked (GlcNAc...) asparagine glycan is attached at asparagine 396. Cysteine 526 bears the S-nitrosocysteine mark. Cysteine 555 and cysteine 561 are joined by a disulfide. Residue serine 565 is modified to O-acetylserine. N-linked (GlcNAc...) asparagine glycosylation occurs at asparagine 580.

It belongs to the prostaglandin G/H synthase family. In terms of assembly, homodimer. Heme b serves as cofactor. S-nitrosylation by NOS2 (iNOS) activates enzyme activity. S-nitrosylation may take place on different Cys residues in addition to Cys-526. Post-translationally, acetylated at Ser-565 by SPHK1. During neuroinflammation, acetylation by SPHK1 promotes neuronal secretion of specialized preresolving mediators (SPMs), especially 15-R-lipoxin A4, which results in an increase of phagocytic microglia.

The protein resides in the microsome membrane. Its subcellular location is the endoplasmic reticulum membrane. It is found in the nucleus inner membrane. It localises to the nucleus outer membrane. It catalyses the reaction (5Z,8Z,11Z,14Z)-eicosatetraenoate + AH2 + 2 O2 = prostaglandin H2 + A + H2O. The catalysed reaction is (5Z,8Z,11Z,14Z)-eicosatetraenoate + 2 O2 = prostaglandin G2. The enzyme catalyses prostaglandin G2 + AH2 = prostaglandin H2 + A + H2O. It carries out the reaction (5Z,8Z,11Z,14Z,17Z)-eicosapentaenoate + 2 O2 = prostaglandin G3. It catalyses the reaction prostaglandin G3 + AH2 = prostaglandin H3 + A + H2O. The catalysed reaction is (8Z,11Z,14Z)-eicosatrienoate + 2 O2 = prostaglandin G1. The enzyme catalyses prostaglandin G1 + AH2 = prostaglandin H1 + A + H2O. It carries out the reaction 2-(5Z,8Z,11Z,14Z)-eicosatetraenoyl-sn-glycero-3-phosphoethanolamine + 2 O2 = 2-(prostaglandin G2)-sn-glycero-3-phosphoethanolamine. It catalyses the reaction 2-(prostaglandin G2)-sn-glycero-3-phosphoethanolamine + AH2 = 2-(prostaglandin H2)-sn-glycero-3-phosphoethanolamine + A + H2O. The catalysed reaction is 2-(5Z,8Z,11Z,14Z)-eicosatetraenoyl-sn-glycero-3-phosphocholine + 2 O2 = 2-(prostaglandin G2)-sn-glycero-3-phosphocholine. The enzyme catalyses 2-(prostaglandin G2)-sn-glycero-3-phosphocholine + AH2 = 2-(prostaglandin H2)-sn-glycero-3-phosphocholine + A + H2O. It carries out the reaction (15S)-hydroperoxy-(5Z,8Z,11Z,13E)-eicosatetraenoate + AH2 = (15S)-hydroxy-(5Z,8Z,11Z,13E)-eicosatetraenoate + A + H2O. It catalyses the reaction 2-(5Z,8Z,11Z,14Z)-eicosatetraenoyl-sn-glycero-3-phosphocholine + AH2 + O2 = 2-[(15S)-hydroxy-(5Z,8Z,11Z,13E)-eicosatetraenoyl]-sn-glycero-3-phosphocholine + A + H2O. The catalysed reaction is 2-(5Z,8Z,11Z,14Z)-eicosatetraenoyl-sn-glycero-3-phosphocholine + AH2 + O2 = 2-[(15R)-hydroxy-(5Z,8Z,11Z,13E)-eicosatetraenoyl]-sn-glycero-3-phosphocholine + A + H2O. The enzyme catalyses 2-(5Z,8Z,11Z,14Z)-eicosatetraenoyl-sn-glycero-3-phosphocholine + AH2 + O2 = 2-[(11R)-hydroxy-(5Z,8Z,12E,14Z)-eicosatetraenoyl]-sn-glycero-3-phosphocholine + A + H2O. It carries out the reaction (9Z,12Z)-octadecadienoate + AH2 + O2 = 9-hydroxy-(10E,12Z)-octadecadienoate + A + H2O. It catalyses the reaction (9Z,12Z)-octadecadienoate + AH2 + O2 = 13-hydroxy-(9Z,11E)-octadecadienoate + A + H2O. The catalysed reaction is (5Z,8Z,11Z,14Z)-eicosatetraenoate + AH2 + O2 = (15R)-hydroxy-(5Z,8Z,11Z,13E)-eicosatetraenoate + A + H2O. The enzyme catalyses (5Z,8Z,11Z,14Z)-eicosatetraenoate + AH2 + O2 = (11R)-hydroxy-(5Z,8Z,12E,14Z)-eicosatetraenoate + A + H2O. It carries out the reaction (5Z,8Z,11Z,14Z,17Z)-eicosapentaenoate + AH2 + O2 = (11R)-hydroxy-(5Z,8Z,12E,14Z,17Z)-eicosapentaenoate + A + H2O. It catalyses the reaction (5Z,8Z,11Z,14Z,17Z)-eicosapentaenoate + AH2 + O2 = (18S)-hydroxy-(5Z,8Z,11Z,14Z,16E)-eicosapentaenoate + A + H2O. The catalysed reaction is (5Z,8Z,11Z,14Z,17Z)-eicosapentaenoate + AH2 + O2 = (18R)-hydroxy-(5Z,8Z,11Z,14Z,16E)-eicosapentaenoate + A + H2O. The enzyme catalyses (5Z,8Z,11Z,14Z,17Z)-eicosapentaenoate + AH2 + O2 = (15R)-hydroxy-(5Z,8Z,11Z,13E,17Z)-eicosapentaenoate + A + H2O. It carries out the reaction (5Z,8Z,11Z,14Z,17Z)-eicosapentaenoate + AH2 + O2 = (15S)-hydroxy-(5Z,8Z,11Z,13E,17Z)-eicosapentaenoate + A + H2O. It catalyses the reaction (7Z,10Z,13Z,16Z,19Z)-docosapentaenoate + AH2 + O2 = 13R-hydroxy-(7Z,10Z,14E,16Z,19Z)-docosapentaenoate + A + H2O. The catalysed reaction is (4Z,7Z,10Z,13Z,16Z,19Z)-docosahexaenoate + AH2 + O2 = 13-hydroxy-(4Z,7Z,10Z,14E,16Z,19Z)-docosahexaenoate + A + H2O. The enzyme catalyses (5S)-hydroxy-(6E,8Z,11Z,14Z)-eicosatetraenoate + AH2 + O2 = (5S,15R)-dihydroxy-(6E,8Z,11Z,13E)-eicosatetraenoate + A + H2O. It carries out the reaction (4Z,7Z,10Z,13Z,16Z,19Z)-docosahexaenoate + AH2 + O2 = 17R-hydroxy-(4Z,7Z,10Z,13Z,15E,19Z)-docosahexaenoate + A + H2O. It catalyses the reaction (5S)-hydroxy-(6E,8Z,11Z,14Z)-eicosatetraenoate + AH2 + O2 = (5S,15S)-dihydroxy-(6E,8Z,11Z,13E)-eicosatetraenoate + A + H2O. The catalysed reaction is (5S)-hydroxy-(6E,8Z,11Z,14Z)-eicosatetraenoate + AH2 + O2 = (5S,11R)-dihydroxy-(6E,8Z,12E,14Z)-eicosatetraenoate + A + H2O. The enzyme catalyses 2-(5Z,8Z,11Z,14Z-eicosatetraenoyl)-glycerol + 2 O2 = 2-glyceryl-prostaglandin G2. It carries out the reaction 2-glyceryl-prostaglandin G2 + AH2 = 2-glyceryl-prostaglandin H2 + A + H2O. It catalyses the reaction (5Z,8Z,11Z,14Z)-eicosatetraenoate + O2 = (15R)-hydroperoxy-(5Z,8Z,11Z,13E)-eicosatetraenoate. The catalysed reaction is (5Z,8Z,11Z,14Z)-eicosatetraenoate + O2 = 11R-hydroperoxy-(5Z,8Z,12E,14Z)-eicosatetraenoate. The enzyme catalyses (9Z,12Z)-octadecadienoate + AH2 + O2 = (9R)-hydroxy-(10E,12Z)-octadecadienoate + A + H2O. It carries out the reaction (9Z,12Z)-octadecadienoate + AH2 + O2 = (9S)-hydroxy-(10E,12Z)-octadecadienoate + A + H2O. It catalyses the reaction (9Z,12Z)-octadecadienoate + AH2 + O2 = (13S)-hydroxy-(9Z,11E)-octadecadienoate + A + H2O. The catalysed reaction is (9Z,12Z)-octadecadienoate + AH2 + O2 = (13R)-hydroxy-(9Z,11E)-octadecadienoate + A + H2O. It functions in the pathway lipid metabolism; prostaglandin biosynthesis. With respect to regulation, the cyclooxygenase activity is inhibited by nonsteroidal anti-inflammatory drugs (NSAIDs) including aspirin, ibuprofen, flurbiprofen, celecoxib, flufenamic, mefenamic and tolfenamic acids as well as by hydroperoxide scavenger erythrocyte glutathione peroxidase GPX1. Aspirin triggers enzyme acetylation turning off its ability to generate pro-inflammatory prostaglandins, but switches on its capacity to produce anti-inflammatory lipid mediators involved in inflammation resolution. Aspirin enhances lipoxygenase-type activity toward production of epimers with R stereochemistry such as 15R-HETE, 18R-HEPE, 15R-HEPE and 17R-HDHA. Atorvastatin, a cholesterol-lowering drug, triggers enzyme S-nitrosylation increasing production of 13-series resolvins (RvTs). Dual cyclooxygenase and peroxidase in the biosynthesis pathway of prostanoids, a class of C20 oxylipins mainly derived from arachidonate ((5Z,8Z,11Z,14Z)-eicosatetraenoate, AA, C20:4(n-6)), with a particular role in the inflammatory response. The cyclooxygenase activity oxygenates AA to the hydroperoxy endoperoxide prostaglandin G2 (PGG2), and the peroxidase activity reduces PGG2 to the hydroxy endoperoxide prostaglandin H2 (PGH2), the precursor of all 2-series prostaglandins and thromboxanes. This complex transformation is initiated by abstraction of hydrogen at carbon 13 (with S-stereochemistry), followed by insertion of molecular O2 to form the endoperoxide bridge between carbon 9 and 11 that defines prostaglandins. The insertion of a second molecule of O2 (bis-oxygenase activity) yields a hydroperoxy group in PGG2 that is then reduced to PGH2 by two electrons. Similarly catalyzes successive cyclooxygenation and peroxidation of dihomo-gamma-linoleate (DGLA, C20:3(n-6)) and eicosapentaenoate (EPA, C20:5(n-3)) to corresponding PGH1 and PGH3, the precursors of 1- and 3-series prostaglandins. In an alternative pathway of prostanoid biosynthesis, converts 2-arachidonoyl lysophopholipids to prostanoid lysophopholipids, which are then hydrolyzed by intracellular phospholipases to release free prostanoids. Metabolizes 2-arachidonoyl glycerol yielding the glyceryl ester of PGH2, a process that can contribute to pain response. Generates lipid mediators from n-3 and n-6 polyunsaturated fatty acids (PUFAs) via a lipoxygenase-type mechanism. Oxygenates PUFAs to hydroperoxy compounds and then reduces them to corresponding alcohols. Plays a role in the generation of resolution phase interaction products (resolvins) during both sterile and infectious inflammation. Metabolizes docosahexaenoate (DHA, C22:6(n-3)) to 17R-HDHA, a precursor of the D-series resolvins (RvDs). As a component of the biosynthetic pathway of E-series resolvins (RvEs), converts eicosapentaenoate (EPA, C20:5(n-3)) primarily to 18S-HEPE that is further metabolized by ALOX5 and LTA4H to generate 18S-RvE1 and 18S-RvE2. In vascular endothelial cells, converts docosapentaenoate (DPA, C22:5(n-3)) to 13R-HDPA, a precursor for 13-series resolvins (RvTs) shown to activate macrophage phagocytosis during bacterial infection. In activated leukocytes, contributes to oxygenation of hydroxyeicosatetraenoates (HETE) to diHETES (5,15-diHETE and 5,11-diHETE). Can also use linoleate (LA, (9Z,12Z)-octadecadienoate, C18:2(n-6)) as substrate and produce hydroxyoctadecadienoates (HODEs) in a regio- and stereospecific manner, being (9R)-HODE ((9R)-hydroxy-(10E,12Z)-octadecadienoate) and (13S)-HODE ((13S)-hydroxy-(9Z,11E)-octadecadienoate) its major products. During neuroinflammation, plays a role in neuronal secretion of specialized preresolving mediators (SPMs) 15R-lipoxin A4 that regulates phagocytic microglia. This chain is Prostaglandin G/H synthase 2, found in Homo sapiens (Human).